Reading from the N-terminus, the 393-residue chain is Bifunctional chrysanthemol synthase, chloroplastic (393 aa).

Over residues 1–18 (MACSSSLSSKWASWGASS) the composition is skewed to low complexity. Residues 1-22 (MACSSSLSSKWASWGASSRPHP) form a disordered region. A chloroplast-targeting transit peptide spans 1–53 (MACSSSLSSKWASWGASSRPHPSVQPFVTRKNVVRYHKPTSELSYSPLTTTLS). Positions 99, 102, and 137 each coordinate dimethylallyl diphosphate. Mg(2+)-binding residues include D144 and D148. 7 residues coordinate dimethylallyl diphosphate: R153, R154, K241, Q280, D287, K297, and K306.

This sequence belongs to the FPP/GGPP synthase family. Mg(2+) is required as a cofactor. As to expression, restricted to glandular trichomes during achene maturation. Expressed in flowers and in both ray and disk florets.

The protein resides in the plastid. It is found in the chloroplast. The catalysed reaction is 2 dimethylallyl diphosphate = (R,R)-chrysanthemyl diphosphate + diphosphate. The enzyme catalyses (R,R)-chrysanthemyl diphosphate + H2O = (R,R)-chrysanthemol + diphosphate. It catalyses the reaction (R)-lavandulyl diphosphate + H2O = (R)-lavandulol + diphosphate. Its pathway is isoprenoid biosynthesis. In terms of biological role, component of the monoterpenoid pyrethrins biosynthesis; pyrethrins are widely used plant-derived pesticide. Catalyzes the condensation of two molecules of dimethylallyl diphosphate to produce chrysanthemyl diphosphate (CPP), a monoterpene with a non-head-to-tail or irregular c1'-2-3 linkage between isoprenoid units. In a second step, hydrolyzes the diphosphate moiety of CPP to form chrysanthemol. With a lower efficiency, can also converts dimethylallyl diphosphate into lavandulyl diphosphate (LPP), and subsequently LPP into lavandulol. This chain is Bifunctional chrysanthemol synthase, chloroplastic, found in Tanacetum cinerariifolium (Dalmatian daisy).